Consider the following 172-residue polypeptide: Centrin-1 (172 aa).

The tract at residues 1–31 (MASGFKKPSAASTGQKRKVAPKPELTEDQKQ) is disordered. EF-hand domains follow at residues 28–63 (DQKQEVREAFDLFDVDGSGTIDAKELKVAMRALGFE), 64–99 (PRKEEMKKMISEVDREGTGKISFNDFLAVMTQKMSE), 101–136 (DTKEEILKAFRLFDDDETGKISFKNLKRVANELGEN), and 137–172 (LTDEELQEMIDEADRDGDGEVNEEEFLRIMKKTSLY). The Ca(2+) site is built by Asp-41, Asp-43, Ser-45, Thr-47, and Glu-52. The Ca(2+) site is built by Asp-150, Asp-152, Asp-154, Glu-156, and Glu-161.

The protein belongs to the centrin family. As to quaternary structure, monomer. Interacts with CIMAP3. Interacts with USP49.

The protein resides in the cytoplasm. It is found in the cytoskeleton. The protein localises to the microtubule organizing center. It localises to the centrosome. Its subcellular location is the cell projection. The protein resides in the cilium. Functionally, plays a fundamental role in microtubule-organizing center structure and function. Plays a role in sperm cilia formation. The polypeptide is Centrin-1 (Homo sapiens (Human)).